The chain runs to 1064 residues: MPKRNDIKKIMIIGSGPIIIGQAAEFDYAGTQACLALKEEGYEVVLVNSNPATIMTDREIADTVYIEPITLEFVSKILRKERPDALLPTLGGQTGLNMAMELSKIGILEELNVELLGTKLSAIDQAEDRELFKELCERIGEPLCASDIATTVDEAVEIADKIGYPIIVRPAFTMGGTGGGICDTEEELREIVANGLKLSPVTQCLIEESIAGYKEIEYEVMRDSADNAIVVCNMENFDPVGVHTGDSIVFAPSQTLSDNEYQMLRDASLNIIRALKIEGGCNVQLALDPHSYEYRVIEVNPRVSRSSALASKATGYPIAKMSAKIAIGMTLDEIINPVTNKTYAMFEPALDYVVAKIARFPFDKFENGDRHLGTQMKATGEVMAIGRNIEESLLKAVRSLEIGVFHNDLQEAQDADDEILYEKMVKTQDDRLFYVSEAIRRGIPIEEIADLTKIDIFFLDKLLHIVEIEDQLKVNIFEPELLKTAKKNGFSDRQIAKLWNVSPEEVRRRRQENRTIPVYKMVDTCAAEFESSTPYFYSTYEWENESKRSSKEKIIVLGSGPIRIGQGVEFDYATVHCVKALQALGKEAIVINSNPETVSTDFSISDKLYFEPLTFEDVMNIIDLEQPEGVIVQFGGQTAINLAEPLSKAGVKILGTQVEDLDRAEDRDLFEKALQDLEIPQPPGATATNEEEAVANANKIGYPVLIRPSFVLGGRAMEIINNEKDLRDYMNRAVKASPEHPVLVDSYLQGRECEVDAICDGTEVLLPGIMEHIERAGVHSGDSMAVYPPQTFSQEIIDTIVDYTKRLAIGLNCIGMMNIQFVIFEEQVYVIEVNPRASRTVPFLSKVTNIPMAQLATQMILGKNLKDLGYTEGLAETPDMVHVKAPVFSFTKLAKVDSLLGPEMKSTGEAMGSDVTLEKALYKSFEAAKLHMADYGSVLFTVADEDKEETLALAKDFAEIGYSLVATQGTAAFFKENGLYVREVEKLAGGEDEEGTLVEDIRHGRVQAVVNTMGNTRASLTTATDGFRIRQEAISRGIPLFTSLDTVAAILKVMQSRSFTTKNI.

The carboxyphosphate synthetic domain stretch occupies residues 1–401 (MPKRNDIKKI…SLLKAVRSLE (401 aa)). Positions 129, 169, 175, 176, 208, 210, 215, 241, 242, 243, 284, and 298 each coordinate ATP. The region spanning 133 to 327 (KELCERIGEP…IAKMSAKIAI (195 aa)) is the ATP-grasp 1 domain. Mg(2+) is bound by residues Q284, E298, and N300. The Mn(2+) site is built by Q284, E298, and N300. The segment at 402-546 (IGVFHNDLQE…YSTYEWENES (145 aa)) is oligomerization domain. Residues 547–929 (KRSSKEKIIV…ALYKSFEAAK (383 aa)) form a carbamoyl phosphate synthetic domain region. One can recognise an ATP-grasp 2 domain in the interval 671–861 (EKALQDLEIP…MAQLATQMIL (191 aa)). R707, S746, L748, E752, G777, V778, H779, S780, Q820, and E832 together coordinate ATP. Mg(2+) is bound by residues Q820, E832, and N834. 3 residues coordinate Mn(2+): Q820, E832, and N834. Residues 930-1064 (LHMADYGSVL…QSRSFTTKNI (135 aa)) enclose the MGS-like domain. An allosteric domain region spans residues 930–1064 (LHMADYGSVL…QSRSFTTKNI (135 aa)).

Belongs to the CarB family. In terms of assembly, composed of two chains; the small (or glutamine) chain promotes the hydrolysis of glutamine to ammonia, which is used by the large (or ammonia) chain to synthesize carbamoyl phosphate. Tetramer of heterodimers (alpha,beta)4. Requires Mg(2+) as cofactor. The cofactor is Mn(2+).

The enzyme catalyses hydrogencarbonate + L-glutamine + 2 ATP + H2O = carbamoyl phosphate + L-glutamate + 2 ADP + phosphate + 2 H(+). It catalyses the reaction hydrogencarbonate + NH4(+) + 2 ATP = carbamoyl phosphate + 2 ADP + phosphate + 2 H(+). Its pathway is amino-acid biosynthesis; L-arginine biosynthesis; carbamoyl phosphate from bicarbonate: step 1/1. The protein operates within pyrimidine metabolism; UMP biosynthesis via de novo pathway; (S)-dihydroorotate from bicarbonate: step 1/3. Large subunit of the glutamine-dependent carbamoyl phosphate synthetase (CPSase). CPSase catalyzes the formation of carbamoyl phosphate from the ammonia moiety of glutamine, carbonate, and phosphate donated by ATP, constituting the first step of 2 biosynthetic pathways, one leading to arginine and/or urea and the other to pyrimidine nucleotides. The large subunit (synthetase) binds the substrates ammonia (free or transferred from glutamine from the small subunit), hydrogencarbonate and ATP and carries out an ATP-coupled ligase reaction, activating hydrogencarbonate by forming carboxy phosphate which reacts with ammonia to form carbamoyl phosphate. The polypeptide is Carbamoyl phosphate synthase large chain (Lactococcus lactis subsp. lactis (strain IL1403) (Streptococcus lactis)).